Consider the following 444-residue polypeptide: Argininosuccinate synthase (444 aa).

Residues 18 to 26 and alanine 44 contribute to the ATP site; that span reads AFSGGLDTS. Tyrosine 100 is an L-citrulline binding site. 2 residues coordinate ATP: glycine 130 and threonine 132. Threonine 132, asparagine 136, and aspartate 137 together coordinate L-aspartate. An L-citrulline-binding site is contributed by asparagine 136. Aspartate 137 contributes to the ATP binding site. Residues arginine 140 and serine 193 each coordinate L-citrulline. Residue aspartate 195 participates in ATP binding. Residues threonine 202, glutamate 204, and glutamate 281 each contribute to the L-citrulline site.

The protein belongs to the argininosuccinate synthase family. Type 2 subfamily. As to quaternary structure, homotetramer.

The protein resides in the cytoplasm. The enzyme catalyses L-citrulline + L-aspartate + ATP = 2-(N(omega)-L-arginino)succinate + AMP + diphosphate + H(+). It functions in the pathway amino-acid biosynthesis; L-arginine biosynthesis; L-arginine from L-ornithine and carbamoyl phosphate: step 2/3. The sequence is that of Argininosuccinate synthase from Haemophilus influenzae (strain PittEE).